The sequence spans 285 residues: Aquaporin PIP2-5 (285 aa).

Helical transmembrane passes span 38-58 and 75-95; these read AVIA…ATVI and CGGV…FILV. Positions 107–109 match the NPA 1 motif; it reads NPA. 3 helical membrane-spanning segments follow: residues 126-146, 168-188, and 202-222; these read LLYI…VKGF, GTGL…VFSA, and VLAP…TIPI. Positions 228 to 230 match the NPA 2 motif; the sequence is NPA. A helical transmembrane segment spans residues 250 to 270; that stretch reads IFWVGPFIGAAIAAAYHQYVL.

It belongs to the MIP/aquaporin (TC 1.A.8) family. PIP (TC 1.A.8.11) subfamily. As to quaternary structure, homomers. May interact with PIP1-2 to form heteromers. Specifically expressed in roots, in the exodermis, endodermis and xylem parenchyma. Polar localization to the external periclinal side of epidermal cells in root apices.

It is found in the cell membrane. Functionally, water channel required to facilitate the transport of water across cell membrane. Its function is impaired by Hg(2+). May play a role in water uptake from the root surface. Active as homomers. Increased activity when heteromerization with PIP1-2. This Zea mays (Maize) protein is Aquaporin PIP2-5 (PIP2-5).